A 403-amino-acid chain; its full sequence is MGIRAFLDKIEHHFEKGGKYEKWYALYEAADTFLYRPGSVTKTTAHVRDGIDLKRMMITVWLCTFPAMFFGMWNTGYQANLIYAQSPDLLAAQEGWRFALIGAFAGFDPNSLWDNFIQGAAYFLPIYAVTFIVGGFWEVLFASIRKHEVNEGFFVTSVLFALILPPTIPLWQVALGISFGVVIGKEIFGGTGKNFLNPALTARAFLFFAYPAQMSGDAVWTAVDGYAGATALSLGFAGGIENVISSGITWMDAFVGTIHGSIGETSTLAIFIGGAVLIGSKIASWRIVTGVMLGMIALSTLFNLIGSETNPLFGMPWYWHMVVGGFAFGMIFMATDPVSASMTNTGKWVFGILIGVMVVLIRVVNPAFPEGMMLAILFANLCAPLIDHFVIQANIKRRLARNV.

9 helical membrane-spanning segments follow: residues 56–76, 121–141, 163–183, 220–240, 258–278, 287–307, 312–332, 348–368, and 371–391; these read MMIT…WNTG, AYFL…EVLF, ILPP…GVVI, WTAV…AGGI, IHGS…AVLI, IVTG…LIGS, LFGM…GMIF, WVFG…NPAF, and GMML…HFVI. Thr-230 is modified (FMN phosphoryl threonine).

This sequence belongs to the NqrB/RnfD family. As to quaternary structure, composed of six subunits; NqrA, NqrB, NqrC, NqrD, NqrE and NqrF. FMN serves as cofactor.

It is found in the cell inner membrane. The enzyme catalyses a ubiquinone + n Na(+)(in) + NADH + H(+) = a ubiquinol + n Na(+)(out) + NAD(+). Functionally, NQR complex catalyzes the reduction of ubiquinone-1 to ubiquinol by two successive reactions, coupled with the transport of Na(+) ions from the cytoplasm to the periplasm. NqrA to NqrE are probably involved in the second step, the conversion of ubisemiquinone to ubiquinol. This chain is Na(+)-translocating NADH-quinone reductase subunit B, found in Stutzerimonas stutzeri (strain A1501) (Pseudomonas stutzeri).